Consider the following 256-residue polypeptide: Thiazole synthase (256 aa).

Lys-95 acts as the Schiff-base intermediate with DXP in catalysis. 1-deoxy-D-xylulose 5-phosphate is bound by residues Gly-156, 182–183 (AG), and 204–205 (NT).

The protein belongs to the ThiG family. As to quaternary structure, homotetramer. Forms heterodimers with either ThiH or ThiS.

It is found in the cytoplasm. It carries out the reaction [ThiS sulfur-carrier protein]-C-terminal-Gly-aminoethanethioate + 2-iminoacetate + 1-deoxy-D-xylulose 5-phosphate = [ThiS sulfur-carrier protein]-C-terminal Gly-Gly + 2-[(2R,5Z)-2-carboxy-4-methylthiazol-5(2H)-ylidene]ethyl phosphate + 2 H2O + H(+). The protein operates within cofactor biosynthesis; thiamine diphosphate biosynthesis. Functionally, catalyzes the rearrangement of 1-deoxy-D-xylulose 5-phosphate (DXP) to produce the thiazole phosphate moiety of thiamine. Sulfur is provided by the thiocarboxylate moiety of the carrier protein ThiS. In vitro, sulfur can be provided by H(2)S. This is Thiazole synthase from Klebsiella pneumoniae subsp. pneumoniae (strain ATCC 700721 / MGH 78578).